Consider the following 532-residue polypeptide: Light-independent protochlorophyllide reductase subunit B (532 aa).

Position 36 (aspartate 36) interacts with [4Fe-4S] cluster. The Proton donor role is filled by aspartate 282. Position 417–418 (glycine 417–leucine 418) interacts with substrate.

The protein belongs to the ChlB/BchB/BchZ family. In terms of assembly, protochlorophyllide reductase is composed of three subunits; BchL, BchN and BchB. Forms a heterotetramer of two BchB and two BchN subunits. Requires [4Fe-4S] cluster as cofactor.

The catalysed reaction is chlorophyllide a + oxidized 2[4Fe-4S]-[ferredoxin] + 2 ADP + 2 phosphate = protochlorophyllide a + reduced 2[4Fe-4S]-[ferredoxin] + 2 ATP + 2 H2O. It functions in the pathway porphyrin-containing compound metabolism; bacteriochlorophyll biosynthesis (light-independent). Its function is as follows. Component of the dark-operative protochlorophyllide reductase (DPOR) that uses Mg-ATP and reduced ferredoxin to reduce ring D of protochlorophyllide (Pchlide) to form chlorophyllide a (Chlide). This reaction is light-independent. The NB-protein (BchN-BchB) is the catalytic component of the complex. The polypeptide is Light-independent protochlorophyllide reductase subunit B (Methylobacterium radiotolerans (strain ATCC 27329 / DSM 1819 / JCM 2831 / NBRC 15690 / NCIMB 10815 / 0-1)).